The primary structure comprises 890 residues: Phosphatidate phosphatase LPIN1 (890 aa).

Positions 1 to 108 are N-LIP; it reads MNYVGQLAGQ…IPMHLATSPI (108 aa). Phosphoserine occurs at positions 106 and 150. Disordered stretches follow at residues 125–183, 228–300, 365–392, and 421–456; these read VDRM…DMFP, SYPN…SSRK, KPPS…SRHL, and SGLA…STSD. Positions 152–161 are enriched in basic residues; sequence VKKRRKRRRK. A Nuclear localization signal motif is present at residues 153–158; it reads KKRRKR. Basic and acidic residues-rich tracts occupy residues 162-172 and 252-265; these read SQLDSLKRDDN and SDSE…ERTG. Phosphoserine occurs at positions 252, 254, and 260. T264 bears the Phosphothreonine mark. At S294 the chain carries Phosphoserine. At K425 the chain carries N6-acetyllysine. Residues 431 to 440 are compositionally biased toward polar residues; it reads GARSANQSPQ. 3 positions are modified to phosphoserine: S434, S438, and S449. Over residues 441-456 the composition is skewed to low complexity; the sequence is SVGSSGVDSGVESTSD. Residue K565 forms a Glycyl lysine isopeptide (Lys-Gly) (interchain with G-Cter in SUMO) linkage. Residues 566 to 616 are disordered; the sequence is EESKPEQCLAGKAHSTGEQPPQLSLATRVKHESSSSDEERAAAKPSNAGHL. Residues 581 to 590 are compositionally biased toward polar residues; the sequence is TGEQPPQLSL. The segment covering 594–607 has biased composition (basic and acidic residues); it reads VKHESSSSDEERAA. Residue K595 is modified to N6-acetyllysine. K595 is covalently cross-linked (Glycyl lysine isopeptide (Lys-Gly) (interchain with G-Cter in SUMO)). Phosphoserine occurs at positions 600 and 601. The interval 624 to 830 is C-LIP; that stretch reads YKKTLRLTSE…VNPKGELVQE (207 aa). The DXDXT motif signature appears at 678–682; it reads DIDGT. The LXXIL motif motif lies at 689 to 693; the sequence is LGHIL. Residues S887 and S889 each carry the phosphoserine modification.

This sequence belongs to the lipin family. In terms of assembly, interacts (via LXXIL motif) with PPARA. Interacts with PPARGC1A. Interaction with PPARA and PPARGC1A leads to the formation of a complex that modulates gene transcription. Interacts with MEF2C. Mg(2+) serves as cofactor. Mn(2+) is required as a cofactor. Phosphorylated at multiple sites by mTOR in response to insulin, leading to its inactivation. Phosphorylation does not affect the catalytic activity but regulates the localization. Phosphorylation is decreased by epinephrine. Dephosphorylated by the CTDNEP1-CNEP1R1 complex. Dephosphorylation following mTOR inhibition promotes its activity. In terms of processing, acetylation at Lys-425 and Lys-595 by KAT5 in response to fatty acids promotes translocation to the endoplasmic reticulum and synthesis of diacylglycerol. Post-translationally, sumoylated. Specifically expressed in skeletal muscle. Also abundant in adipose tissue. Lower levels in some portions of the digestive tract.

The protein localises to the cytoplasm. It is found in the cytosol. The protein resides in the endoplasmic reticulum membrane. Its subcellular location is the nucleus membrane. The enzyme catalyses a 1,2-diacyl-sn-glycero-3-phosphate + H2O = a 1,2-diacyl-sn-glycerol + phosphate. It catalyses the reaction 1-octadecanoyl-2-(4Z,7Z,10Z,13Z,16Z,19Z-docosahexaenoyl)-sn-glycero-3-phosphate + H2O = 1-octadecanoyl-2-(4Z,7Z,10Z,13Z,16Z,19Z-docosahexaenoyl)-sn-glycerol + phosphate. The catalysed reaction is 1-octadecanoyl-2-(5Z,8Z,11Z,14Z-eicosatetraenoyl)-sn-glycero-3-phosphate + H2O = 1-octadecanoyl-2-(5Z,8Z,11Z,14Z-eicosatetraenoyl)-sn-glycerol + phosphate. It carries out the reaction 1-octadecanoyl-2-(9Z,12Z-octadecadienoyl)-sn-glycero-3-phosphate + H2O = 1-octadecanoyl-2-(9Z,12Z)-octadecadienoyl-sn-glycerol + phosphate. The enzyme catalyses 1-octadecanoyl-2-(9Z-octadecenoyl)-sn-glycero-3-phosphate + H2O = 1-octadecanoyl-2-(9Z-octadecenoyl)-sn-glycerol + phosphate. It catalyses the reaction 1-hexadecanoyl-2-(4Z,7Z,10Z,13Z,16Z,19Z-docosahexaenoyl)-sn-glycero-3-phosphate + H2O = 1-hexadecanoyl-2-(4Z,7Z,10Z,13Z,16Z,19Z-docosahexaenoyl)-sn-glycerol + phosphate. The catalysed reaction is 1,2-dioctadecanoyl-sn-glycero-3-phosphate + H2O = 1,2-dioctadecanoyl-sn-glycerol + phosphate. It carries out the reaction 1-hexadecanoyl-2-(5Z,8Z,11Z,14Z-eicosatetraenoyl)-sn-glycero-3-phosphate + H2O = 1-hexadecanoyl-2-(5Z,8Z,11Z,14Z-eicosatetraenoyl)-sn-glycerol + phosphate. The enzyme catalyses 1-hexadecanoyl-2-(9Z,12Z-octadecadienoyl)-sn-glycero-3-phosphate + H2O = 1-hexadecanoyl-2-(9Z,12Z-octadecadienoyl)-sn-glycerol + phosphate. It catalyses the reaction 1-hexadecanoyl-2-(9Z-octadecenoyl)-sn-glycero-3-phosphate + H2O = 1-hexadecanoyl-2-(9Z-octadecenoyl)-sn-glycerol + phosphate. The catalysed reaction is 1,2-di-(4Z,7Z,10Z,13Z,16Z,19Z-docosahexaenoyl)-sn-glycero-3-phosphate + H2O = 1,2-di-(4Z,7Z,10Z,13Z,16Z,19Z-docosahexaenoyl)-sn-glycerol + phosphate. It carries out the reaction 1,2-di-(5Z,8Z,11Z,14Z)-eicosatetraenoyl-sn-glycero-3-phosphate + H2O = 1,2-di-(5Z,8Z,11Z,14Z)-eicosatetraenoyl-sn-glycerol + phosphate. The enzyme catalyses 1,2-di-(9Z,12Z-octadecadienoyl)-sn-glycero-3-phosphate + H2O = 1,2-di-(9Z,12Z-octadecadienoyl)-sn-glycerol + phosphate. It catalyses the reaction 1,2-di-(9Z-octadecenoyl)-sn-glycero-3-phosphate + H2O = 1,2-di-(9Z-octadecenoyl)-sn-glycerol + phosphate. The catalysed reaction is 1,2-dihexadecanoyl-sn-glycero-3-phosphate + H2O = 1,2-dihexadecanoyl-sn-glycerol + phosphate. Its activity is regulated as follows. Potently inhibited by sphingolipids, in particular, the sphingoid bases sphinganine and sphingosine and ceramide-1-phosphate. Inhibited by concentrations of Mg(2+) and Mn(2+) above their optimums and by Ca(2+), Zn(2+), N-ethylmaleimide and propranolol. Sertraline and propanolol inhibit activity in dose-dependent manners with IC(50) values of 103 uM and 226 uM, respectively. With respect to regulation, sertraline and propanolol inhibit activity in dose-dependent manners with IC(50) values of 108 uM and 271 uM, respectively. Its activity is regulated as follows. Sertraline and propanolol inhibit activity in dose-dependent manners with IC(50) values of 143 uM and 227 uM, respectively. In terms of biological role, acts as a magnesium-dependent phosphatidate phosphatase enzyme which catalyzes the conversion of phosphatidic acid to diacylglycerol during triglyceride, phosphatidylcholine and phosphatidylethanolamine biosynthesis and therefore controls the metabolism of fatty acids at different levels. Is involved in adipocyte differentiation. Recruited at the mitochondrion outer membrane and is involved in mitochondrial fission by converting phosphatidic acid to diacylglycerol. Acts also as nuclear transcriptional coactivator for PPARGC1A/PPARA regulatory pathway to modulate lipid metabolism gene expression. The sequence is that of Phosphatidate phosphatase LPIN1 from Homo sapiens (Human).